A 1887-amino-acid chain; its full sequence is DNA-directed RNA polymerase II subunit RPB1 (1887 aa).

Residues C67, C70, C77, H80, C107, C110, C150, and C176 each contribute to the Zn(2+) site. The disordered stretch occupies residues 156 to 178; it reads MDLTKENQQPDPNKKPGHGGCGH. Mg(2+) contacts are provided by D487, D489, and D491. A bridging helix region spans residues 825–837; the sequence is PSEFYFHAMGGRE. K1260 is covalently cross-linked (Glycyl lysine isopeptide (Lys-Gly) (interchain with G-Cter in ubiquitin)). Disordered stretches follow at residues 1528-1565 and 1579-1887; these read TPGG…GPSM and YSPT…ESED. 3 stretches are compositionally biased toward low complexity: residues 1529–1565, 1579–1610, and 1626–1650; these read PGGP…GPSM, YSPT…PTSP, and PQST…PTVQ. Copy 1 of the repeat occupies 1579–1585; sequence YSPTSPN. A C-terminal domain (CTD); 32 X 7 AA approximate tandem repeats of Y-[ST]-P-[STNVAPGN]-[STGMA]-[PSTR]-[SNAGCQKTLRIMH] region spans residues 1579-1881; it reads YSPTSPNYTA…SPAYSPSSPT (303 aa). One copy of the 2; approximate repeat lies at 1586–1592; the sequence is YTASSPG. 4 tandem repeats follow at residues 1598–1604, 1605–1611, 1631–1637, and 1638–1644. Polar residues predominate over residues 1651–1664; sequence FQSSPSFAGSGSNI. Positions 1665–1760 are enriched in low complexity; that stretch reads YSPGNAYSPS…GVKYSPTSPT (96 aa). Repeat copies occupy residues 1671–1677, 1678–1684, 1685–1691, 1692–1698, 1699–1705, 1706–1712, 1713–1719, 1720–1726, 1727–1733, 1740–1746, 1754–1760, 1761–1767, 1777–1783, 1784–1790, 1791–1797, 1798–1804, and 1811–1817. Residues 1776–1786 show a composition bias toward polar residues; sequence QYTPGSPQYSP. A compositionally biased stretch (low complexity) spans 1788–1813; sequence SPKYSPTSPLYSPSSPQHSPSNQYSP. A compositionally biased stretch (polar residues) spans 1814–1831; sequence TGSTYSATSPRYSPNMSI. A 24; approximate repeat occupies 1818 to 1824; the sequence is YSATSPR. Repeat copies occupy residues 1825–1831, 1832–1838, 1839–1845, 1846–1852, 1853–1859, 1860–1866, 1868–1874, and 1875–1881. Residues 1832–1849 are compositionally biased toward low complexity; sequence YSPSSTKYSPTSPTYTPT. Over residues 1850 to 1859 the composition is skewed to polar residues; the sequence is ARNYSPTSPM. The segment covering 1860–1881 has biased composition (low complexity); that stretch reads YSPTAPSHYSPTSPAYSPSSPT.

The protein belongs to the RNA polymerase beta' chain family. Component of the RNA polymerase II (Pol II) complex consisting of 12 subunits. The tandem 7 residues repeats in the C-terminal domain (CTD) can be highly phosphorylated. The phosphorylation activates Pol II. Phosphorylation occurs mainly at residues 'Ser-2' and 'Ser-5' of the heptapeptide repeat. The phosphorylation state is believed to result from the balanced action of site-specific CTD kinases and phosphatase, and a 'CTD code' that specifies the position of Pol II within the transcription cycle has been proposed. Post-translationally, following transcription stress, the elongating form of RNA polymerase II (RNA pol IIo) is polyubiquitinated via 'Lys-63'-linkages on Lys-1260 at DNA damage sites without leading to degradation: ubiquitination promotes RNA pol IIo backtracking to allow access by the transcription-coupled nucleotide excision repair (TC-NER) machinery. Subsequent DEF1-dependent polyubiquitination by the elongin complex via 'Lys-48'-linkages may lead to proteasome-mediated degradation; presumably at stalled RNA pol II where TC-NER has failed, to halt global transcription and enable 'last resort' DNA repair pathways.

Its subcellular location is the nucleus. It carries out the reaction RNA(n) + a ribonucleoside 5'-triphosphate = RNA(n+1) + diphosphate. Functionally, DNA-dependent RNA polymerase catalyzes the transcription of DNA into RNA using the four ribonucleoside triphosphates as substrates. Largest and catalytic component of RNA polymerase II which synthesizes mRNA precursors and many functional non-coding RNAs. Forms the polymerase active center together with the second largest subunit. Pol II is the central component of the basal RNA polymerase II transcription machinery. It is composed of mobile elements that move relative to each other. RPB1 is part of the core element with the central large cleft, the clamp element that moves to open and close the cleft and the jaws that are thought to grab the incoming DNA template. At the start of transcription, a single-stranded DNA template strand of the promoter is positioned within the central active site cleft of Pol II. A bridging helix emanates from RPB1 and crosses the cleft near the catalytic site and is thought to promote translocation of Pol II by acting as a ratchet that moves the RNA-DNA hybrid through the active site by switching from straight to bent conformations at each step of nucleotide addition. During transcription elongation, Pol II moves on the template as the transcript elongates. Elongation is influenced by the phosphorylation status of the C-terminal domain (CTD) of Pol II largest subunit (RPB1), which serves as a platform for assembly of factors that regulate transcription initiation, elongation, termination and mRNA processing. This chain is DNA-directed RNA polymerase II subunit RPB1, found in Drosophila melanogaster (Fruit fly).